Here is a 396-residue protein sequence, read N- to C-terminus: L-lactate dehydrogenase (396 aa).

Residues 1 to 380 (MIISAASDYR…TQDSLVQVLG (380 aa)) enclose the FMN hydroxy acid dehydrogenase domain. Substrate is bound at residue Y24. Residues S106 and Q127 each contribute to the FMN site. Position 129 (Y129) interacts with substrate. Position 155 (T155) interacts with FMN. R164 serves as a coordination point for substrate. Residue K251 participates in FMN binding. H275 acts as the Proton acceptor in catalysis. R278 contributes to the substrate binding site. Residue 306–330 (DSGIRNGLDVVRMIALGADTVLLGR) coordinates FMN.

The protein belongs to the FMN-dependent alpha-hydroxy acid dehydrogenase family. Requires FMN as cofactor.

The protein resides in the cell inner membrane. The enzyme catalyses (S)-lactate + A = pyruvate + AH2. In terms of biological role, catalyzes the conversion of L-lactate to pyruvate. Is coupled to the respiratory chain. In Escherichia coli O45:K1 (strain S88 / ExPEC), this protein is L-lactate dehydrogenase.